The following is a 1407-amino-acid chain: MMSFSKNATPRAIVSESSTLHEMKFRNFRVAHEKISLDIDLATHCITGSATIIIIPLIQNLEYVTFDCKEMTIKDVLVENRRCDQFIHDDPLQTNLNGLTSQNVLYSDNSIEQSHFLRSKFASLNEYPETDSKSQLTIKIPSSIKISLEDANALSNYTPITPSIKTTPGFQESVFTPITLQIEYEIRNPKSGIKFDTVYADKPWLWNVYTSNGEICSSASYWVPCVDLLDEKSTWELEFSVPRLVKNIGTSKLIGQNGEESEKEKEDTPEHDEEEEGKPARVIKDEDKDSNLKNDEEGKNSKSKDAQDNDEEEEEGESDEEEEEGEEERRNIEESNNPSLRDVIVCCSEYSNIKELPHPIDLTKKKCIFQIINPVAPHHIGWAIGAFNSWSLPLISPPSVDAEDEVEEDKLRENVVDNVNDTMDDDIGSDIIPIQIFTLPTQETDELTVINSTVVCQKIIDFYSKEFGSYPFTCYSMVFLPTAPSKHMDFAALGICNTRLLYPLEVIDKAFSTTNELAWALANQWSCVNITPLDMNDYWCCLGIAGYMVFQVTKKLMGNNTYKYQLKRNSEAIVEQDFEKPPIGSTFTGSSRPISWSSKDLSFIQLKAPMILHILDRRMTKTERSFGMSRVLPKIFLQAMSGDLPNNSLTSSHFQHVCERVNKSKLENFFNEWVYGSGVPILRVTQRFNRKRMVIELGIRQVQDEELGHEKVVGEEGFFKSALDHLEHPDLNRTECFTGSMTIRIHEHDGTPYEHIVEIKDTFTKIDIQYNTKYRRLRKRGGGANDENGVENNNEEKPIVVDVNCLGNVYMSPEECSRFSLTEFNRTSESNELLKQNEAFEWIRIDSDLEWICQMHINQPDYMFSSQLRQDGDIEAQLEAIRYYEDVVVNGGVKSLVYSSILFRTAIDERYFFGIRLAACEALSKYVYDPDFTGGVKHLIQIFQILFCLEDSNIPKSNNFENPKLYFLQCNIPKYLAKVKNENGKCPKLVKQFLLDILVYNENGENKYSDDAYVRSLIENVVKVALNEYKDKAYMEKVKTQLLRYENLVNWLSSYESLIKTTIMYAKYKLHKVGAYDFTELTGMIMHTLTLGINNGDISRESFQNEFLMVLKIMLLEGGLKNKDALVLFTEILCFHEDSYIRDKSVDVLSECVNLVVMDGSLDTISDDIKSSVQSVHNEVKNIKSEDDIELFLSGHYVDDMKIKIEKIGRQNISGLIQICRDMFKGYSPLKILLWDVLNLPVLSLYQRKQIHDLVRVMYTLINSFVVRLETPRERRLVAKMNSNEEGKLDIVIKRESILKVHIKKEVTSTVEAPKKANKIKISLKGDKPVRKVEKQIVKPKVTSKQRKVKSHVNRMGSLPLRFVKIQQQPRVMVHLSSVPYSQFVQITKVTSRSFMVKIRTKNDAKN.

T158 and T161 each carry phosphothreonine. S163 is subject to Phosphoserine. The interval 252 to 336 is disordered; it reads KLIGQNGEES…EERRNIEESN (85 aa). The span at 277–307 shows a compositional bias: basic and acidic residues; sequence GKPARVIKDEDKDSNLKNDEEGKNSKSKDAQ. Residues 304 to 337 are a coiled coil; sequence KDAQDNDEEEEEGESDEEEEEGEEERRNIEESNN. A compositionally biased stretch (acidic residues) spans 308 to 326; the sequence is DNDEEEEEGESDEEEEEGE. S318 carries the post-translational modification Phosphoserine. Residues 1285-1350 are highly charged; that stretch reads EEGKLDIVIK…KVTSKQRKVK (66 aa).

This sequence belongs to the TAF2 family. In terms of assembly, the 1.2 MDa TFIID complex is composed of TATA binding protein (TBP) and the 14 TBP-associated factors. One copy of each TAF1, TAF2, TAF3, TAF7, TAF8, TAF11, TAF13, two copies of each TAF4, TAF5, TAF6, TAF9, TAF10, TAF12, and three copies of TAF14.

It localises to the nucleus. Functions as a component of the DNA-binding general transcription factor complex TFIID. Binding of TFIID to a promoter (with or without TATA element) is the initial step in pre-initiation complex (PIC) formation. TFIID plays a key role in the regulation of gene expression by RNA polymerase II through different activities such as transcription activator interaction, core promoter recognition and selectivity, TFIIA and TFIIB interaction, chromatin modification (histone acetylation by TAF1), facilitation of DNA opening and initiation of transcription. In Saccharomyces cerevisiae (strain ATCC 204508 / S288c) (Baker's yeast), this protein is Transcription initiation factor TFIID subunit 2 (TAF2).